A 222-amino-acid polypeptide reads, in one-letter code: Superoxide dismutase [Mn], mitochondrial (222 aa).

The transit peptide at 1 to 24 (MLCRAACSAGRRLGPAASTAGSRH) directs the protein to the mitochondrion. His50 contributes to the Mn(2+) binding site. The residue at position 58 (Tyr58) is a 3'-nitrotyrosine. N6-acetyllysine; alternate occurs at positions 68 and 75. Lys68 and Lys75 each carry N6-succinyllysine; alternate. Residue His98 coordinates Mn(2+). Lys114 bears the N6-acetyllysine mark. Residues Lys122 and Lys130 each carry the N6-acetyllysine; alternate modification. Lys122 and Lys130 each carry N6-succinyllysine; alternate. Residues Asp183 and His187 each contribute to the Mn(2+) site. Lys202 is subject to N6-acetyllysine.

Belongs to the iron/manganese superoxide dismutase family. Homotetramer. Mn(2+) serves as cofactor. Post-translationally, nitrated under oxidative stress. Nitration coupled with oxidation inhibits the catalytic activity. Acetylation at Lys-122 decreases enzymatic activity. Deacetylated by SIRT3 upon exposure to ionizing radiations or after long fasting. In terms of processing, polyubiquitinated; leading to proteasomal degradation. Deubiquitinated by USP36 which increases protein stability.

The protein resides in the mitochondrion matrix. It catalyses the reaction 2 superoxide + 2 H(+) = H2O2 + O2. Functionally, destroys superoxide anion radicals which are normally produced within the cells and which are toxic to biological systems. In Rattus norvegicus (Rat), this protein is Superoxide dismutase [Mn], mitochondrial (Sod2).